Here is a 209-residue protein sequence, read N- to C-terminus: Fibroblast growth factor 21 (209 aa).

An N-terminal signal peptide occupies residues 1–28 (MDSDETGFEHSGLWVSVLAGLLLGACQA). Positions 143–209 (PLHLPGNKSP…SQGRSPSYAS (67 aa)) are disordered. Residues 168 to 186 (PGLPPALPEPPGILAPQPP) show a composition bias toward pro residues.

The protein belongs to the heparin-binding growth factors family. As to quaternary structure, interacts (via C-terminus) with KLB; this interaction is direct. Interacts with FGFR4.

The protein resides in the secreted. Functionally, stimulates glucose uptake in differentiated adipocytes via the induction of glucose transporter SLC2A1/GLUT1 expression (but not SLC2A4/GLUT4 expression). Activity requires the presence of KLB. Regulates systemic glucose homeostasis and insulin sensitivity. This chain is Fibroblast growth factor 21 (FGF21), found in Homo sapiens (Human).